A 77-amino-acid polypeptide reads, in one-letter code: Large ribosomal subunit protein bL28 (77 aa).

It belongs to the bacterial ribosomal protein bL28 family.

This Leptothrix cholodnii (strain ATCC 51168 / LMG 8142 / SP-6) (Leptothrix discophora (strain SP-6)) protein is Large ribosomal subunit protein bL28.